The sequence spans 79 residues: Small ribosomal subunit protein bS21 (79 aa).

The segment at 58–79 is disordered; it reads ARKKMQREGLLPMKPKPMPGMR.

Belongs to the bacterial ribosomal protein bS21 family.

The protein is Small ribosomal subunit protein bS21 of Beijerinckia indica subsp. indica (strain ATCC 9039 / DSM 1715 / NCIMB 8712).